A 406-amino-acid chain; its full sequence is Multifunctional CCA protein (406 aa).

Gly-8 and Arg-11 together coordinate ATP. CTP contacts are provided by Gly-8 and Arg-11. Positions 21 and 23 each coordinate Mg(2+). Residues Arg-91, Arg-137, and Arg-140 each coordinate ATP. CTP contacts are provided by Arg-91, Arg-137, and Arg-140. The HD domain occupies 225-326; that stretch reads TGIHTLKVLE…LKLLNRVDAF (102 aa).

This sequence belongs to the tRNA nucleotidyltransferase/poly(A) polymerase family. Bacterial CCA-adding enzyme type 1 subfamily. As to quaternary structure, monomer. Can also form homodimers and oligomers. It depends on Mg(2+) as a cofactor. The cofactor is Ni(2+).

It catalyses the reaction a tRNA precursor + 2 CTP + ATP = a tRNA with a 3' CCA end + 3 diphosphate. The catalysed reaction is a tRNA with a 3' CCA end + 2 CTP + ATP = a tRNA with a 3' CCACCA end + 3 diphosphate. Functionally, catalyzes the addition and repair of the essential 3'-terminal CCA sequence in tRNAs without using a nucleic acid template. Adds these three nucleotides in the order of C, C, and A to the tRNA nucleotide-73, using CTP and ATP as substrates and producing inorganic pyrophosphate. tRNA 3'-terminal CCA addition is required both for tRNA processing and repair. Also involved in tRNA surveillance by mediating tandem CCA addition to generate a CCACCA at the 3' terminus of unstable tRNAs. While stable tRNAs receive only 3'-terminal CCA, unstable tRNAs are marked with CCACCA and rapidly degraded. The polypeptide is Multifunctional CCA protein (Nitrosococcus oceani (strain ATCC 19707 / BCRC 17464 / JCM 30415 / NCIMB 11848 / C-107)).